A 234-amino-acid chain; its full sequence is Nuclear transcription factor Y subunit C-1 (234 aa).

2 disordered regions span residues 1–20 and 205–234; these read MDTNNQQPPPSAAGIPPPPP and SVWQTSTGTGDDVSYGSGGSSGQGNLDGQG. Positions 7 to 20 are enriched in pro residues; that stretch reads QPPPSAAGIPPPPP. A compositionally biased stretch (low complexity) spans 209–219; that stretch reads TSTGTGDDVSY. Residues 220–234 show a composition bias toward gly residues; sequence GSGGSSGQGNLDGQG.

The protein belongs to the NFYC/HAP5 subunit family. In terms of assembly, heterotrimeric transcription factor composed of three components, NF-YA, NF-YB and NF-YC. NF-YB and NF-YC must interact and dimerize for NF-YA association and DNA binding. As to expression, ubiquitous. Present in etiolated seedlings.

It is found in the nucleus. Functionally, stimulates the transcription of various genes by recognizing and binding to a CCAAT motif in promoters. The protein is Nuclear transcription factor Y subunit C-1 (NFYC1) of Arabidopsis thaliana (Mouse-ear cress).